The chain runs to 1087 residues: Exportin-7 (1087 aa).

The 67-residue stretch at 30-96 (AEKALVEFTN…RNYVLNYLAT (67 aa)) folds into the Importin N-terminal domain.

It belongs to the exportin family.

It localises to the cytoplasm. The protein localises to the nucleus. Its function is as follows. Mediates the nuclear export of proteins (cargos) with broad substrate specificity. This Gallus gallus (Chicken) protein is Exportin-7 (XPO7).